The chain runs to 357 residues: Dynein axonemal assembly factor 10 (357 aa).

WD repeat units lie at residues 80–127 (EFTN…IPIW), 132–170 (AHQGSISAIDAYADNLVVCGGKDGTIKVYDTRIKPNSAN), 184–223 (EQTNKSNCWSICTNDNNIIAGFENGDLNIYNLKTNSIQST), and 277–321 (EPNQ…IDKV).

In terms of assembly, interacts with PIH1D1; the interaction associates DNAAF10 with the R2TP complex. Interacts with several dynein axonemal assembly factors.

It localises to the dynein axonemal particle. Its function is as follows. Key assembly factor specifically required for the stability of axonemal dynein heavy chains in cytoplasm. The chain is Dynein axonemal assembly factor 10 (dnaaf10) from Dictyostelium discoideum (Social amoeba).